Here is a 124-residue protein sequence, read N- to C-terminus: MATINQLVRKPRSMKVAKSNVPALEACPQKRGVCTRVYTTTPKKPNSALRKVCRVRLTNGFEVTSYIGGEGHNLQEHSVILIRGGRVKDLPGVRYHTVRGALDCSGVKDRKQSRSKYGVKKQKA.

The residue at position 89 (aspartate 89) is a 3-methylthioaspartic acid.

The protein belongs to the universal ribosomal protein uS12 family. As to quaternary structure, part of the 30S ribosomal subunit. Contacts proteins S8 and S17. May interact with IF1 in the 30S initiation complex.

In terms of biological role, with S4 and S5 plays an important role in translational accuracy. Interacts with and stabilizes bases of the 16S rRNA that are involved in tRNA selection in the A site and with the mRNA backbone. Located at the interface of the 30S and 50S subunits, it traverses the body of the 30S subunit contacting proteins on the other side and probably holding the rRNA structure together. The combined cluster of proteins S8, S12 and S17 appears to hold together the shoulder and platform of the 30S subunit. The polypeptide is Small ribosomal subunit protein uS12 (Yersinia pestis (strain Pestoides F)).